Consider the following 434-residue polypeptide: UDP-N-acetylmuramoylalanine--D-glutamate ligase (434 aa).

Position 126-132 (126-132 (GTSGKTT)) interacts with ATP.

Belongs to the MurCDEF family.

The protein resides in the cytoplasm. It catalyses the reaction UDP-N-acetyl-alpha-D-muramoyl-L-alanine + D-glutamate + ATP = UDP-N-acetyl-alpha-D-muramoyl-L-alanyl-D-glutamate + ADP + phosphate + H(+). It participates in cell wall biogenesis; peptidoglycan biosynthesis. Functionally, cell wall formation. Catalyzes the addition of glutamate to the nucleotide precursor UDP-N-acetylmuramoyl-L-alanine (UMA). This is UDP-N-acetylmuramoylalanine--D-glutamate ligase from Desulfovibrio desulfuricans (strain ATCC 27774 / DSM 6949 / MB).